We begin with the raw amino-acid sequence, 203 residues long: Small ribosomal subunit protein uS4c (203 aa).

Residues 15-42 (LGALPGLTSKRPRAGSDPRNQELSGNKS) are disordered. The S4 RNA-binding domain maps to 89–150 (MRLDNILFRL…DQKSKAMIQN (62 aa)).

Belongs to the universal ribosomal protein uS4 family. In terms of assembly, part of the 30S ribosomal subunit. Contacts protein S5. The interaction surface between S4 and S5 is involved in control of translational fidelity.

The protein localises to the plastid. It is found in the chloroplast. Its function is as follows. One of the primary rRNA binding proteins, it binds directly to 16S rRNA where it nucleates assembly of the body of the 30S subunit. In terms of biological role, with S5 and S12 plays an important role in translational accuracy. The polypeptide is Small ribosomal subunit protein uS4c (rps4) (Oenothera elata subsp. hookeri (Hooker's evening primrose)).